The following is a 240-amino-acid chain: Alkaline phosphatase synthesis transcriptional regulatory protein PhoP (240 aa).

Residues 4–118 (KILVVDDEES…EVNARVKAIL (115 aa)) enclose the Response regulatory domain. At Asp53 the chain carries 4-aspartylphosphate. The ompR/PhoB-type DNA-binding region spans 136–235 (EGQIVIGDLK…IRGLGYKLEE (100 aa)).

Post-translationally, phosphorylated by PhoR.

Its subcellular location is the cytoplasm. Member of the two-component regulatory system PhoP/PhoR involved in the regulation of alkaline phosphatase genes phoA and phoB and of phosphodiesterase. The polypeptide is Alkaline phosphatase synthesis transcriptional regulatory protein PhoP (phoP) (Bacillus subtilis (strain 168)).